A 412-amino-acid chain; its full sequence is rRNA methyltransferase 1, mitochondrial (412 aa).

The N-terminal 20 residues, 1 to 20 (MTSLTNAVFKRYLAVTPSAH), are a transit peptide targeting the mitochondrion.

It belongs to the class IV-like SAM-binding methyltransferase superfamily. RNA methyltransferase TrmH family.

It localises to the mitochondrion. It catalyses the reaction guanosine(2270) in 21S rRNA + S-adenosyl-L-methionine = 2'-O-methylguanosine(2270) in 21S rRNA + S-adenosyl-L-homocysteine + H(+). Its function is as follows. S-adenosyl-L-methionine-dependent 2'-O-ribose methyltransferase that catalyzes the formation of 2'-O-methylguanosine at position 2270 (Gm2270) in the 21S mitochondrial large subunit ribosomal RNA (mtLSU rRNA), a universally conserved modification in the peptidyl transferase domain of the mtLSU rRNA. This modification seems to be important for the normal accumulation of the mitochondrial large ribosomal subunit. In Saccharomyces cerevisiae (strain ATCC 204508 / S288c) (Baker's yeast), this protein is rRNA methyltransferase 1, mitochondrial.